Here is an 84-residue protein sequence, read N- to C-terminus: Dolichol phosphate-mannose biosynthesis regulatory protein (84 aa).

Transmembrane regions (helical) follow at residues 11 to 31 (FGLV…VILL) and 49 to 69 (YAVL…GLFI).

It belongs to the DPM2 family. In terms of assembly, component of the dolichol-phosphate mannose (DPM) synthase complex composed of DPM1, DPM2 and DPM3; in the complex interacts directly with DPM3. Component of the glycosylphosphatidylinositol-N-acetylglucosaminyltransferase (GPI-GnT) complex composed at least by PIGA, PIGC, PIGH, PIGP, PIGQ, PIGY and DPM2. Interacts with PIGA, PIGC and PIGQ.

Its subcellular location is the endoplasmic reticulum membrane. It participates in protein modification; protein glycosylation. Its function is as follows. Regulates the biosynthesis of dolichol phosphate-mannose. Regulatory subunit of the dolichol-phosphate mannose (DPM) synthase complex; essential for the ER localization and stable expression of DPM1. Part of the glycosylphosphatidylinositol-N-acetylglucosaminyltransferase (GPI-GnT) complex that catalyzes the transfer of N-acetylglucosamine from UDP-N-acetylglucosamine to phosphatidylinositol and participates in the first step of GPI biosynthesis. May act by regulating the GPI-GNT complex. The polypeptide is Dolichol phosphate-mannose biosynthesis regulatory protein (Mus musculus (Mouse)).